Consider the following 345-residue polypeptide: Adenosine kinase 2 (345 aa).

Residue aspartate 300 is part of the active site.

The protein belongs to the carbohydrate kinase PfkB family. As to quaternary structure, interacts with the begomovirus AL2 protein and the curtovirus L2 protein. Interacts with KIN11. Requires Mg(2+) as cofactor. Post-translationally, phosphorylated by KIN11. In terms of tissue distribution, widely expressed.

It localises to the cytoplasm. The catalysed reaction is adenosine + ATP = AMP + ADP + H(+). The protein operates within purine metabolism; AMP biosynthesis via salvage pathway; AMP from adenosine: step 1/1. With respect to regulation, inactivated by the begomovirus AL2 protein or the curtovirus L2 protein. ATP dependent phosphorylation of adenosine and other related nucleoside analogs to monophosphate derivatives. Essential to sustain methyl recycling. This Arabidopsis thaliana (Mouse-ear cress) protein is Adenosine kinase 2.